The sequence spans 481 residues: p-aminobenzoyl-glutamate hydrolase subunit B (481 aa).

As to quaternary structure, forms a heterodimer with AbgA. Mn(2+) is required as a cofactor.

Its function is as follows. Component of the p-aminobenzoyl-glutamate hydrolase multicomponent enzyme system which catalyzes the cleavage of p-aminobenzoyl-glutamate (PABA-GLU) to form p-aminobenzoate (PABA) and glutamate. AbgAB does not degrade dipeptides and the physiological role of abgABT should be clarified. This is p-aminobenzoyl-glutamate hydrolase subunit B (abgB) from Escherichia coli (strain K12).